Reading from the N-terminus, the 746-residue chain is MNSPASDETAPRRNRRKVSRKNYDENAMDELIEKQLGGKAKKKYRTKQDLEKETETEALIALSVGFPIDELLEEEIRAGVVRELGGKEQNDYIVVRNHIVARWRGNVGIWLLKDQIRETVSSDFEHLISAAYDFLLFNGYINFGVSPLFAPYIPEEGTEGSVIVVGAGLAGLAAARQLLSFGFKVLVLEGRSRPGGRVYTQKMGGKDRFAAVELGGSVITGLHANPLGVLARQLSIPLHKVRDNCPLYNSEGVLVDKVADSNVEFGFNKLLDKVTEVREMMEGAAKKISLGEVLETLRVLYGVAKDSEERKLFDWHLANLEYANAGCLSNLSAAYWDQDDPYEMGGDHCFLAGGNWRLINALAEGLPIIYGKSVDTIKYGDGGVEVISGSQIFQADMILCTVPLGVLKKRSIKFEPELPRRKQAAIDRLGFGLLNKVAMLFPSVFWGDELDTFGCLNESSINRGEFFLFYAYHTVSGGPALVALVAGEAAQRFECTEPSVLLHRVLKKLRGIYGPKGVVVPDPIQTVCTRWGSDPLSYGSYSHVRVGSSGVDYDILAESVSNRLFFAGEATTRQHPATMHGAYLSGLREASKILHVANYLRSNLKKPVQRYSGVNINVLEDMFKRPDIAIGKLSFVFNPLTDDPKSFGLVRVCFDNFEEDPTNRLQLYTILSREQANKIKELDENSNESKLSCLMNTLGLKLMGANSVLDTGGALISVIANARRGRSRSHVVAGQCNLPLNPLHFN.

The segment at 1-26 (MNSPASDETAPRRNRRKVSRKNYDEN) is disordered. The region spanning 51–152 (EKETETEALI…FGVSPLFAPY (102 aa)) is the SWIRM domain. E189, R191, R197, and E569 together coordinate FAD.

It belongs to the flavin monoamine oxidase family. The cofactor is FAD. In terms of tissue distribution, expressed in the shoot and root apical regions of young seedlings. Expressed in inflorescences.

In terms of biological role, probable histone demethylase that reduces the levels of histone H3 'Lys-4' methylation in chromatin of the floral repressor FLOWERING LOCUS C (FLC) and the sporophytically silenced floral repressor FWA. Seems to act in partial redundancy with FLOWERING LOCUS D (FLD) to repress FLC expression. Required for cytosine methylation of FWA. Controls primary seed dormancy by regulating DOG1 and abscisic acid signaling-related genes. The sequence is that of Lysine-specific histone demethylase 1 homolog 2 from Arabidopsis thaliana (Mouse-ear cress).